A 673-amino-acid chain; its full sequence is Kinesin-like protein KIFC1 (673 aa).

Phosphoserine is present on residues Ser-6, Ser-26, Ser-31, and Ser-33. Disordered regions lie at residues 23–94 (KAPS…TGPR) and 109–136 (VPAV…KRPA). The segment covering 60 to 86 (TKITTSHPRVPSLTTVPQTQGQTTAQK) has biased composition (polar residues). Positions 142-306 (QLCDLNAELK…RRRLHNQLQE (165 aa)) form a coiled coil. In terms of domain architecture, Kinesin motor spans 310–663 (NIRVFCRVRP…LRFASKVNQC (354 aa)). Residues 325-372 (PTPPPGLLLFPSGPGGPSDPPTRLSLSRSDERRGTLSGAPAPPTRHDF) are disordered. Thr-359 is modified (phosphothreonine). 410–417 (GQTGSGKT) is a binding site for ATP.

This sequence belongs to the TRAFAC class myosin-kinesin ATPase superfamily. Kinesin family. NCD subfamily. In terms of assembly, binds NUBP1 and NUBP2. Interacts with PPP1R42.

It localises to the nucleus. It is found in the cytoplasm. Its subcellular location is the cytoskeleton. The protein resides in the microtubule organizing center. The protein localises to the centrosome. It localises to the spindle. It is found in the early endosome. Its function is as follows. Minus end-directed microtubule-dependent motor required for bipolar spindle formation. May contribute to movement of early endocytic vesicles. Regulates cilium formation and structure. The sequence is that of Kinesin-like protein KIFC1 (KIFC1) from Homo sapiens (Human).